Reading from the N-terminus, the 394-residue chain is Elongation factor Tu (394 aa).

One can recognise a tr-type G domain in the interval 10 to 204 (KPHINVGTIG…FLDSYIPEPK (195 aa)). Residues 19 to 26 (GHVDHGKT) form a G1 region. 19–26 (GHVDHGKT) serves as a coordination point for GTP. Mg(2+) is bound at residue Thr-26. The tract at residues 60–64 (GITIN) is G2. A G3 region spans residues 81-84 (DCPG). Residues 81–85 (DCPGH) and 136–139 (NKCD) contribute to the GTP site. Residues 136-139 (NKCD) form a G4 region. Positions 174 to 176 (SAL) are G5.

The protein belongs to the TRAFAC class translation factor GTPase superfamily. Classic translation factor GTPase family. EF-Tu/EF-1A subfamily. Monomer.

It localises to the cytoplasm. It catalyses the reaction GTP + H2O = GDP + phosphate + H(+). Its function is as follows. GTP hydrolase that promotes the GTP-dependent binding of aminoacyl-tRNA to the A-site of ribosomes during protein biosynthesis. The polypeptide is Elongation factor Tu (Buchnera aphidicola subsp. Acyrthosiphon pisum (strain 5A)).